We begin with the raw amino-acid sequence, 187 residues long: Protein GrpE (187 aa).

Residues 1 to 11 show a composition bias toward basic and acidic residues; sequence MTDSSNEHETE. Positions 1–23 are disordered; that stretch reads MTDSSNEHETENPSVPNPDNEIQ.

This sequence belongs to the GrpE family. Homodimer.

The protein localises to the cytoplasm. In terms of biological role, participates actively in the response to hyperosmotic and heat shock by preventing the aggregation of stress-denatured proteins, in association with DnaK and GrpE. It is the nucleotide exchange factor for DnaK and may function as a thermosensor. Unfolded proteins bind initially to DnaJ; upon interaction with the DnaJ-bound protein, DnaK hydrolyzes its bound ATP, resulting in the formation of a stable complex. GrpE releases ADP from DnaK; ATP binding to DnaK triggers the release of the substrate protein, thus completing the reaction cycle. Several rounds of ATP-dependent interactions between DnaJ, DnaK and GrpE are required for fully efficient folding. This chain is Protein GrpE, found in Chlamydia felis (strain Fe/C-56) (Chlamydophila felis).